A 252-amino-acid polypeptide reads, in one-letter code: 3-dehydroquinate dehydratase (252 aa).

3-dehydroquinate-binding positions include Ser-21, 46 to 48, and Arg-82; that span reads EWR. The Proton donor/acceptor role is filled by His-143. The active-site Schiff-base intermediate with substrate is Lys-170. 3-dehydroquinate-binding residues include Arg-213, Ser-232, and Gln-236.

This sequence belongs to the type-I 3-dehydroquinase family. Homodimer.

It carries out the reaction 3-dehydroquinate = 3-dehydroshikimate + H2O. It participates in metabolic intermediate biosynthesis; chorismate biosynthesis; chorismate from D-erythrose 4-phosphate and phosphoenolpyruvate: step 3/7. Functionally, involved in the third step of the chorismate pathway, which leads to the biosynthesis of aromatic amino acids. Catalyzes the cis-dehydration of 3-dehydroquinate (DHQ) and introduces the first double bond of the aromatic ring to yield 3-dehydroshikimate. The protein is 3-dehydroquinate dehydratase of Salmonella agona (strain SL483).